The primary structure comprises 58 residues: Preprotein translocase subunit SecG (58 aa).

At 1–33 the chain is on the cytoplasmic side; that stretch reads MARRRKYEGLNPFVAAGLIKFSEEGELEKIKLS. Residues 34–55 form a helical membrane-spanning segment; sequence PKAAIAISLAIIAAILALNLLL. At 56-58 the chain is on the extracellular side; that stretch reads PPP.

Belongs to the SEC61-beta family. In terms of assembly, component of the protein translocase complex. Heterotrimer consisting of alpha (SecY), beta (SecG) and gamma (SecE) subunits. Can form oligomers of the heterotrimer.

It localises to the cell membrane. Functionally, involved in protein export. The function of the beta subunit is unknown, but it may be involved in stabilization of the trimeric complex. The chain is Preprotein translocase subunit SecG from Pyrobaculum calidifontis (strain DSM 21063 / JCM 11548 / VA1).